Reading from the N-terminus, the 132-residue chain is Small ribosomal subunit protein uS11 (132 aa).

This sequence belongs to the universal ribosomal protein uS11 family. As to quaternary structure, part of the 30S ribosomal subunit. Interacts with proteins S7 and S18. Binds to IF-3.

Its function is as follows. Located on the platform of the 30S subunit, it bridges several disparate RNA helices of the 16S rRNA. Forms part of the Shine-Dalgarno cleft in the 70S ribosome. The protein is Small ribosomal subunit protein uS11 of Bifidobacterium animalis subsp. lactis (strain AD011).